The primary structure comprises 48 residues: ATP synthase protein 8 (48 aa).

A helical membrane pass occupies residues leucine 13–proline 33.

Belongs to the ATPase protein 8 family. In terms of assembly, F-type ATPases have 2 components, CF(1) - the catalytic core - and CF(0) - the membrane proton channel.

It localises to the mitochondrion membrane. In terms of biological role, mitochondrial membrane ATP synthase (F(1)F(0) ATP synthase or Complex V) produces ATP from ADP in the presence of a proton gradient across the membrane which is generated by electron transport complexes of the respiratory chain. F-type ATPases consist of two structural domains, F(1) - containing the extramembraneous catalytic core and F(0) - containing the membrane proton channel, linked together by a central stalk and a peripheral stalk. During catalysis, ATP synthesis in the catalytic domain of F(1) is coupled via a rotary mechanism of the central stalk subunits to proton translocation. Part of the complex F(0) domain. Minor subunit located with subunit a in the membrane. This is ATP synthase protein 8 (ATP8) from Wickerhamomyces canadensis (Yeast).